A 110-amino-acid chain; its full sequence is Phosphoribosyl-AMP cyclohydrolase (110 aa).

Position 80 (D80) interacts with Mg(2+). Zn(2+) is bound at residue C81. The Mg(2+) site is built by D82 and D84. Zn(2+) contacts are provided by C97 and C104.

The protein belongs to the PRA-CH family. In terms of assembly, homodimer. Mg(2+) is required as a cofactor. Zn(2+) serves as cofactor.

It is found in the cytoplasm. It catalyses the reaction 1-(5-phospho-beta-D-ribosyl)-5'-AMP + H2O = 1-(5-phospho-beta-D-ribosyl)-5-[(5-phospho-beta-D-ribosylamino)methylideneamino]imidazole-4-carboxamide. The protein operates within amino-acid biosynthesis; L-histidine biosynthesis; L-histidine from 5-phospho-alpha-D-ribose 1-diphosphate: step 3/9. Catalyzes the hydrolysis of the adenine ring of phosphoribosyl-AMP. This chain is Phosphoribosyl-AMP cyclohydrolase, found in Clostridium botulinum (strain 657 / Type Ba4).